Reading from the N-terminus, the 386-residue chain is Lipoyl synthase, mitochondrial (386 aa).

Residues 1 to 48 (MHGRRHLAASLTRALTQAPSRSISSTPSLLQTLDPSVPSPSPPPAAEP) are disordered. The segment covering 13–34 (RALTQAPSRSISSTPSLLQTLD) has biased composition (polar residues). The segment covering 37 to 46 (VPSPSPPPAA) has biased composition (pro residues). Residues Cys113, Cys118, Cys124, Cys144, Cys148, Cys151, and Ser360 each coordinate [4Fe-4S] cluster. Residues 129–349 (ETGTATATIM…RALGVEMGFR (221 aa)) form the Radical SAM core domain.

Belongs to the radical SAM superfamily. Lipoyl synthase family. [4Fe-4S] cluster is required as a cofactor.

Its subcellular location is the mitochondrion. The catalysed reaction is [[Fe-S] cluster scaffold protein carrying a second [4Fe-4S](2+) cluster] + N(6)-octanoyl-L-lysyl-[protein] + 2 oxidized [2Fe-2S]-[ferredoxin] + 2 S-adenosyl-L-methionine + 4 H(+) = [[Fe-S] cluster scaffold protein] + N(6)-[(R)-dihydrolipoyl]-L-lysyl-[protein] + 4 Fe(3+) + 2 hydrogen sulfide + 2 5'-deoxyadenosine + 2 L-methionine + 2 reduced [2Fe-2S]-[ferredoxin]. Its pathway is protein modification; protein lipoylation via endogenous pathway; protein N(6)-(lipoyl)lysine from octanoyl-[acyl-carrier-protein]: step 2/2. Functionally, catalyzes the radical-mediated insertion of two sulfur atoms into the C-6 and C-8 positions of the octanoyl moiety bound to the lipoyl domains of lipoate-dependent enzymes, thereby converting the octanoylated domains into lipoylated derivatives. The sequence is that of Lipoyl synthase, mitochondrial from Sorghum bicolor (Sorghum).